The sequence spans 82 residues: uncharacterized protein (82 aa).

This is an uncharacterized protein from Lactococcus lactis subsp. lactis (Streptococcus lactis).